Here is a 398-residue protein sequence, read N- to C-terminus: Candidapepsin-3 (398 aa).

Positions 1–18 (MFLKNIFIALAIALLADA) are cleaved as a signal peptide. The propeptide at 19–58 (TPTTSNNSPGFVALNFDVIKTHKNVTGPQGEINTNVNVKR) is activation peptide. A glycan (N-linked (GlcNAc...) asparagine) is linked at asparagine 42. One can recognise a Peptidase A1 domain in the interval 72 to 384 (YASDITVGSN…DLDDNEISLA (313 aa)). Aspartate 90 is a catalytic residue. Residue 90–92 (DTG) coordinates pepstatin A. A compositionally biased stretch (polar residues) spans 103–112 (VSCQAGQGQD). A disordered region spans residues 103-139 (VSCQAGQGQDPNFCKNEGTYSPSSSSSSQNLNSPFSI). The cysteines at positions 105 and 116 are disulfide-linked. Over residues 123–138 (SPSSSSSSQNLNSPFS) the composition is skewed to low complexity. Pepstatin A is bound by residues 140 to 143 (EYGD) and 274 to 278 (DSGTT). Residue aspartate 274 is part of the active site. The cysteines at positions 312 and 350 are disulfide-linked. Asparagine 313 carries an N-linked (GlcNAc...) asparagine glycan.

This sequence belongs to the peptidase A1 family. O-glycosylated.

The protein localises to the secreted. It catalyses the reaction Preferential cleavage at the carboxyl of hydrophobic amino acids, but fails to cleave 15-Leu-|-Tyr-16, 16-Tyr-|-Leu-17 and 24-Phe-|-Phe-25 of insulin B chain. Activates trypsinogen, and degrades keratin.. This is Candidapepsin-3 (SAP3) from Candida albicans (strain WO-1) (Yeast).